A 487-amino-acid chain; its full sequence is Phosphoglucosamine mutase (487 aa).

Ser134 (phosphoserine intermediate) is an active-site residue. Residues Ser134, Asp277, Asp279, and Asp281 each contribute to the Mg(2+) site. Phosphoserine is present on Ser134.

It belongs to the phosphohexose mutase family. Mg(2+) serves as cofactor. In terms of processing, activated by phosphorylation.

The enzyme catalyses alpha-D-glucosamine 1-phosphate = D-glucosamine 6-phosphate. In terms of biological role, catalyzes the conversion of glucosamine-6-phosphate to glucosamine-1-phosphate. The chain is Phosphoglucosamine mutase from Gloeothece citriformis (strain PCC 7424) (Cyanothece sp. (strain PCC 7424)).